An 89-amino-acid polypeptide reads, in one-letter code: Acylphosphatase (89 aa).

Residues 3–89 (ALEIYVSGNV…ENYESFEVAY (87 aa)) form the Acylphosphatase-like domain. Residues R18 and N36 contribute to the active site.

Belongs to the acylphosphatase family.

The enzyme catalyses an acyl phosphate + H2O = a carboxylate + phosphate + H(+). The sequence is that of Acylphosphatase (acyP) from Archaeoglobus fulgidus (strain ATCC 49558 / DSM 4304 / JCM 9628 / NBRC 100126 / VC-16).